A 194-amino-acid chain; its full sequence is Leucyl/phenylalanyl-tRNA--protein transferase (194 aa).

It belongs to the L/F-transferase family.

It localises to the cytoplasm. The catalysed reaction is N-terminal L-lysyl-[protein] + L-leucyl-tRNA(Leu) = N-terminal L-leucyl-L-lysyl-[protein] + tRNA(Leu) + H(+). It carries out the reaction N-terminal L-arginyl-[protein] + L-leucyl-tRNA(Leu) = N-terminal L-leucyl-L-arginyl-[protein] + tRNA(Leu) + H(+). The enzyme catalyses L-phenylalanyl-tRNA(Phe) + an N-terminal L-alpha-aminoacyl-[protein] = an N-terminal L-phenylalanyl-L-alpha-aminoacyl-[protein] + tRNA(Phe). Its function is as follows. Functions in the N-end rule pathway of protein degradation where it conjugates Leu, Phe and, less efficiently, Met from aminoacyl-tRNAs to the N-termini of proteins containing an N-terminal arginine or lysine. This chain is Leucyl/phenylalanyl-tRNA--protein transferase, found in Chlorobium luteolum (strain DSM 273 / BCRC 81028 / 2530) (Pelodictyon luteolum).